The sequence spans 485 residues: E3 ubiquitin-protein ligase rnf8 (485 aa).

The region spanning Val-43–Ile-97 is the FHA domain. The segment at Ala-150–His-232 is disordered. Residues Gly-199–Ala-219 show a composition bias toward basic and acidic residues. Residues Ser-221–Ser-230 show a composition bias toward low complexity. The RING-type zinc-finger motif lies at Cys-392–Trp-430.

It belongs to the RNF8 family. Homodimer. Forms a E2-E3 ubiquitin ligase complex composed of the rnf8 homodimer and a E2 heterodimer of ube2n and ube2v2.

It is found in the nucleus. The enzyme catalyses S-ubiquitinyl-[E2 ubiquitin-conjugating enzyme]-L-cysteine + [acceptor protein]-L-lysine = [E2 ubiquitin-conjugating enzyme]-L-cysteine + N(6)-ubiquitinyl-[acceptor protein]-L-lysine.. Its pathway is protein modification; protein ubiquitination. Functionally, E3 ubiquitin-protein ligase that plays a key role in DNA damage signaling via 2 distinct roles: by mediating the 'Lys-63'-linked ubiquitination of histones H2A and H2AX and promoting the recruitment of DNA repair proteins at double-strand breaks (DSBs) sites, and by catalyzing 'Lys-48'-linked ubiquitination to remove target proteins from DNA damage sites. Following DNA DSBs, it is recruited to the sites of damage by ATM-phosphorylated mdc1 and catalyzes the 'Lys-63'-linked ubiquitination of histones H2A and H2AX. H2A ubiquitination also mediates the ATM-dependent transcriptional silencing at regions flanking DSBs in cis, a mechanism to avoid collision between transcription and repair intermediates. Also catalyzes the formation of 'Lys-48'-linked polyubiquitin chains, leading to degradation of substrate proteins. In addition to its function in damage signaling, also plays a role in higher-order chromatin structure by mediating extensive chromatin decondensation. This Danio rerio (Zebrafish) protein is E3 ubiquitin-protein ligase rnf8.